A 216-amino-acid chain; its full sequence is Glycerol uptake facilitator protein-like 6 (216 aa).

The next 2 helical transmembrane spans lie at 5-25 and 30-50; these read LAEF…VVIA and LAIG…FGGI. Positions 56–58 match the NPA 1 motif; the sequence is NPA. A run of 3 helical transmembrane segments spans residues 72 to 92, 114 to 134, and 147 to 167; these read ADAI…SAAV, IGSG…LMVI, and FAGL…LNLT. Positions 172–174 match the NPA 2 motif; it reads NPA. A helical transmembrane segment spans residues 191 to 213; that stretch reads LWVYILAPEVGAILAAFCARVMG.

It belongs to the MIP/aquaporin (TC 1.A.8) family.

The protein localises to the cell membrane. Probable transporter that facilitates the transmembrane diffusion of an unknown substrate. Is not permeable to water, dihydroxyacetone, glycerol, urea, H(2)O(2) and D/L-lactic acid. This Lactiplantibacillus plantarum (strain ATCC BAA-793 / NCIMB 8826 / WCFS1) (Lactobacillus plantarum) protein is Glycerol uptake facilitator protein-like 6.